The primary structure comprises 216 residues: Neural cell adhesion molecule L1.2 (216 aa).

Residues 1-64 form the Fibronectin type-III domain; it reads EFFIHYLRKD…QTAGARVMEV (64 aa). The Extracellular segment spans residues 1 to 73; sequence EFFIHYLRKD…VKSGFVTESW (73 aa). 2 N-linked (GlcNAc...) asparagine glycosylation sites follow: Asn22 and Asn46. Residues 74 to 94 form a helical membrane-spanning segment; sequence FIGLISALVLLLLVLLILCFI. Topologically, residues 95 to 216 are cytoplasmic; that stretch reads KRSKGGKYSV…GLPNSAALLD (122 aa). Disordered regions lie at residues 127-149 and 173-216; these read YRSLESDNEEKRTASQPSLCEDS and DESL…ALLD. Basic and acidic residues predominate over residues 128–139; sequence RSLESDNEEKRT.

This sequence belongs to the immunoglobulin superfamily. L1/neurofascin/NgCAM family. In terms of tissue distribution, expressed in many postmitotic neurons in 16-36 hours embryos. Little or no expression in the olfactory placode, the anterior lateral line/acoustic ganglia complex, the posterior lateral line ganglion, late-developing hindbrain neurons and some Rohon-Beard cells in the spinal cord.

Its subcellular location is the cell membrane. It is found in the cell projection. It localises to the growth cone. In terms of biological role, cell adhesion molecule with an important role in the development of the nervous system. Involved in neuron-neuron adhesion, neurite fasciculation, outgrowth of neurites, etc. Binds to axonin on neurons. This chain is Neural cell adhesion molecule L1.2 (nadl1.2), found in Danio rerio (Zebrafish).